A 181-amino-acid polypeptide reads, in one-letter code: Adenine phosphoribosyltransferase (181 aa).

Belongs to the purine/pyrimidine phosphoribosyltransferase family. In terms of assembly, homodimer.

It localises to the cytoplasm. It carries out the reaction AMP + diphosphate = 5-phospho-alpha-D-ribose 1-diphosphate + adenine. Its pathway is purine metabolism; AMP biosynthesis via salvage pathway; AMP from adenine: step 1/1. Catalyzes a salvage reaction resulting in the formation of AMP, that is energically less costly than de novo synthesis. This chain is Adenine phosphoribosyltransferase, found in Vibrio parahaemolyticus serotype O3:K6 (strain RIMD 2210633).